Consider the following 554-residue polypeptide: Hydroxylamine reductase (554 aa).

[2Fe-2S] cluster contacts are provided by Cys3, Cys6, Cys18, and Cys25. Residues His252, Glu276, Cys320, Cys408, Cys436, Cys461, Glu495, and Lys497 each coordinate hybrid [4Fe-2O-2S] cluster. Cysteine persulfide is present on Cys408.

The protein belongs to the HCP family. It depends on [2Fe-2S] cluster as a cofactor. The cofactor is hybrid [4Fe-2O-2S] cluster.

It is found in the cytoplasm. The enzyme catalyses A + NH4(+) + H2O = hydroxylamine + AH2 + H(+). Catalyzes the reduction of hydroxylamine to form NH(3) and H(2)O. This chain is Hydroxylamine reductase, found in Shewanella putrefaciens (strain CN-32 / ATCC BAA-453).